Consider the following 281-residue polypeptide: Energy-coupling factor transporter ATP-binding protein EcfA1 (281 aa).

The ABC transporter domain maps to 7–242 (ISVEDIVFRY…NKELVRIGLD (236 aa)). ATP is bound at residue 42–49 (GHNGSGKS). Glutamate 168 functions as the Proton acceptor in the catalytic mechanism.

This sequence belongs to the ABC transporter superfamily. Energy-coupling factor EcfA family. In terms of assembly, forms a stable energy-coupling factor (ECF) transporter complex composed of 2 membrane-embedded substrate-binding proteins (S component), 2 ATP-binding proteins (A component) and 2 transmembrane proteins (T component).

The protein localises to the cell membrane. Its function is as follows. ATP-binding (A) component of a common energy-coupling factor (ECF) ABC-transporter complex. Unlike classic ABC transporters this ECF transporter provides the energy necessary to transport a number of different substrates. In Bacillus subtilis (strain 168), this protein is Energy-coupling factor transporter ATP-binding protein EcfA1.